The sequence spans 53 residues: MVIATDDLEVACPKCERAGEIEGTPCPACSGKGVILTAQGYTLLDFIQKHLNK.

2 CXXCXGXG motif repeats span residues 12–19 (CPKCERAG) and 26–33 (CPACSGKG).

Homopentamer or homohexamer.

It is found in the cytoplasm. By forming a complex with tryptophan-activated TRAP, and masking its RNA binding site, it inhibits TRAP's RNA binding ability, thereby abolishing TRAP regulation of gene expression, leading to antitermination and increased trp operon expression. AT acts by competing with messenger RNA for the RNA binding domain of TRAP. The protein is Tryptophan RNA-binding attenuator protein inhibitory protein (rtpA) of Bacillus subtilis (strain 168).